Consider the following 180-residue polypeptide: NADH-quinone oxidoreductase subunit B (180 aa).

Positions 59, 60, 124, and 154 each coordinate [4Fe-4S] cluster.

Belongs to the complex I 20 kDa subunit family. NDH-1 is composed of 14 different subunits. Subunits NuoB, C, D, E, F, and G constitute the peripheral sector of the complex. Requires [4Fe-4S] cluster as cofactor.

The protein localises to the cell inner membrane. The catalysed reaction is a quinone + NADH + 5 H(+)(in) = a quinol + NAD(+) + 4 H(+)(out). In terms of biological role, NDH-1 shuttles electrons from NADH, via FMN and iron-sulfur (Fe-S) centers, to quinones in the respiratory chain. The immediate electron acceptor for the enzyme in this species is believed to be ubiquinone. Couples the redox reaction to proton translocation (for every two electrons transferred, four hydrogen ions are translocated across the cytoplasmic membrane), and thus conserves the redox energy in a proton gradient. This is NADH-quinone oxidoreductase subunit B from Beijerinckia indica subsp. indica (strain ATCC 9039 / DSM 1715 / NCIMB 8712).